The sequence spans 925 residues: Coronin-7 (925 aa).

4 WD repeats span residues 75 to 115 (CHSD…QALP), 124 to 163 (PEDL…PLTE), 166 to 205 (AHGD…QASQ), and 209 to 253 (AHEN…SALA). Disordered stretches follow at residues 196–216 (DPRT…SRDS) and 399–465 (LVPP…SLQS). Residues 201–210 (PQASQSTQAH) are compositionally biased toward polar residues. The span at 429–460 (SSPPSSLTSPSTPSSLGPTLSSTSGIGTGPSL) shows a compositional bias: low complexity. Phosphoserine is present on residues Ser462 and Ser465. A Glycyl lysine isopeptide (Lys-Gly) (interchain with G-Cter in ubiquitin) cross-link involves residue Lys472. 3 WD repeats span residues 542-582 (QNGA…LEEV), 592-632 (GHME…DRLK), and 635-674 (GHQD…EPLQ). Residue Lys680 forms a Glycyl lysine isopeptide (Lys-Gly) (interchain with G-Cter in ubiquitin) linkage. The stretch at 728 to 768 (DVAPSTLVPSYEPRHWPGAPDWQGDARVFLYELLPESPFFM) is one WD 8 repeat. The disordered stretch occupies residues 857-925 (LQPPDMSPVS…FEGVDEDEWD (69 aa)). A compositionally biased stretch (low complexity) spans 866-882 (SQAPREAPARRAPSSAQ). Positions 884-896 (LEEKSDQQKKEEL) are enriched in basic and acidic residues. The residue at position 915 (Ser915) is a Phosphoserine.

This sequence belongs to the WD repeat coronin family. As to quaternary structure, interacts with clathrin adapter AP1 complex. This interaction takes place at Golgi membranes and not AP1-positive endosomal membranes. Interacts (when ubiquitinated at Lys-472) with EPS15. The membrane-associated form is phosphorylated on tyrosine residues. Post-translationally, ubiquitinated via 'Lys-33'-linked ubiquitin chains by the BCR(KLHL20) E3 ubiquitin ligase complex: 'Lys-33'-linked ubiquitination promotes interaction with EPS15 and facilitates actin polymerization at the trans-Golgi network, thereby facilitating post-Golgi trafficking. Deubiquitinated by ZRANB1/TRABID.

It is found in the golgi apparatus membrane. It localises to the golgi apparatus. Its subcellular location is the trans-Golgi network. The protein localises to the cytoplasmic vesicle. The protein resides in the cytoplasm. It is found in the cytosol. F-actin regulator involved in anterograde Golgi to endosome transport: upon ubiquitination via 'Lys-33'-linked ubiquitin chains by the BCR(KLHL20) E3 ubiquitin ligase complex, interacts with EPS15 and localizes to the trans-Golgi network, where it promotes actin polymerization, thereby facilitating post-Golgi trafficking. May play a role in the maintenance of the Golgi apparatus morphology. The protein is Coronin-7 (CORO7) of Pongo abelii (Sumatran orangutan).